The chain runs to 1205 residues: Nitric oxide synthase 3 (1205 aa).

The segment at 1–73 is disordered; that stretch reads MGNLKSVGQE…PPEGPKFPRV (73 aa). A lipid anchor (N-myristoyl glycine) is attached at Gly-2. 2 S-palmitoyl cysteine lipidation sites follow: Cys-15 and Cys-26. The segment covering 15–27 has biased composition (gly residues); the sequence is CGLGLGLGLGLCG. The span at 33 to 47 shows a compositional bias: pro residues; sequence TPAPEPSRAPAPATP. Zn(2+) is bound by residues Cys-96 and Cys-101. The interval 100-488 is interaction with NOSIP; it reads RCLGSLVLPR…PDPWKGSAAK (389 aa). (6R)-L-erythro-5,6,7,8-tetrahydrobiopterin is bound at residue Ser-104. Phosphoserine; by CDK5 is present on Ser-116. Heme b is bound at residue Cys-186. L-arginine is bound by residues Gln-249, Trp-358, Tyr-359, Glu-363, and Asn-368. Residues Ala-448, Trp-449, and Phe-462 each coordinate (6R)-L-erythro-5,6,7,8-tetrahydrobiopterin. Heme b is bound at residue Tyr-477. Positions 492-512 are calmodulin-binding; it reads IARKKTFKEVANAVKISASLM. At Thr-497 the chain carries Phosphothreonine; by AMPK. The Flavodoxin-like domain maps to 522–705; the sequence is ASILYASETV…AFRGWAQAAF (184 aa). 6 residues coordinate FMN: Ser-528, Glu-529, Thr-530, Arg-532, Ser-574, and Thr-575. A phosphoserine mark is found at Ser-617, Ser-635, and Ser-640. FMN-binding residues include Ser-656, Cys-663, Glu-689, and Gln-693. Positions 758-1004 constitute an FAD-binding FR-type domain; that stretch reads RKMFQATVLS…IRAAPSFRLP (247 aa). Arg-778 lines the NADP(+) pocket. His-800 lines the FAD pocket. The segment at 820 to 848 is disordered; sequence EDPTPPTESVGVEQLEKGSPGGPPPSWVR. Phosphoserine is present on Ser-838. Arg-940, Tyr-942, Ser-943, Thr-958, Ala-960, Tyr-964, Val-977, Cys-978, and Ser-979 together coordinate FAD. Residues Thr-1018, Arg-1051, Ser-1080, Arg-1081, Lys-1087, Tyr-1089, and Gln-1091 each coordinate NADP(+). Thr-1177 bears the Phosphothreonine mark. Ser-1179 carries the post-translational modification Phosphoserine; by AMPK. A Phosphoserine modification is found at Ser-1181.

It belongs to the NOS family. In terms of assembly, homodimer. Interacts with NOSIP and NOSTRIN. Interacts with HSP90AB1. Forms a complex with ASL, ASS1 and SLC7A1; the complex regulates cell-autonomous L-arginine synthesis and citrulline recycling while channeling extracellular L-arginine to nitric oxide synthesis pathway. Heme b serves as cofactor. It depends on FAD as a cofactor. FMN is required as a cofactor. The cofactor is (6R)-L-erythro-5,6,7,8-tetrahydrobiopterin. Post-translationally, phosphorylation by AMPK at Ser-1179 in the presence of Ca(2+)-calmodulin (CaM) activates activity. In absence of Ca(2+)-calmodulin, AMPK also phosphorylates Thr-497, resulting in inhibition of activity. Phosphorylation of Ser-116 by CDK5 reduces activity.

The protein resides in the membrane. Its subcellular location is the caveola. The protein localises to the cytoplasm. It is found in the cytoskeleton. It localises to the golgi apparatus. The protein resides in the cell membrane. The enzyme catalyses 2 L-arginine + 3 NADPH + 4 O2 + H(+) = 2 L-citrulline + 2 nitric oxide + 3 NADP(+) + 4 H2O. Stimulated by calcium/calmodulin. Inhibited by NOSIP and NOSTRIN. In terms of biological role, produces nitric oxide (NO) which is implicated in vascular smooth muscle relaxation through a cGMP-mediated signal transduction pathway. NO mediates vascular endothelial growth factor (VEGF)-induced angiogenesis in coronary vessels and promotes blood clotting through the activation of platelets. In Sus scrofa (Pig), this protein is Nitric oxide synthase 3 (NOS3).